A 139-amino-acid polypeptide reads, in one-letter code: uncharacterized protein (139 aa).

This is an uncharacterized protein from Dryophytes versicolor (chameleon treefrog).